The sequence spans 95 residues: Aspartyl/glutamyl-tRNA(Asn/Gln) amidotransferase subunit C (95 aa).

Belongs to the GatC family. As to quaternary structure, heterotrimer of A, B and C subunits.

It carries out the reaction L-glutamyl-tRNA(Gln) + L-glutamine + ATP + H2O = L-glutaminyl-tRNA(Gln) + L-glutamate + ADP + phosphate + H(+). The enzyme catalyses L-aspartyl-tRNA(Asn) + L-glutamine + ATP + H2O = L-asparaginyl-tRNA(Asn) + L-glutamate + ADP + phosphate + 2 H(+). Functionally, allows the formation of correctly charged Asn-tRNA(Asn) or Gln-tRNA(Gln) through the transamidation of misacylated Asp-tRNA(Asn) or Glu-tRNA(Gln) in organisms which lack either or both of asparaginyl-tRNA or glutaminyl-tRNA synthetases. The reaction takes place in the presence of glutamine and ATP through an activated phospho-Asp-tRNA(Asn) or phospho-Glu-tRNA(Gln). This chain is Aspartyl/glutamyl-tRNA(Asn/Gln) amidotransferase subunit C, found in Shouchella clausii (strain KSM-K16) (Alkalihalobacillus clausii).